A 700-amino-acid chain; its full sequence is Long-chain-fatty-acid--CoA ligase 1 (700 aa).

Residues 1–21 form a disordered region; it reads MVAQYTVPVGKAANEHETAPR. A Glycyl lysine isopeptide (Lys-Gly) (interchain with G-Cter in ubiquitin) cross-link involves residue Lys-189. 269–280 is a binding site for ATP; that stretch reads YTSGSTGEPKGV. The FACS signature appears at 531–580; it reads DGWFKTGDIGEWEANGHLKIIDRKKNLVKTMNGEYIALEKLESVYRSNEY.

Belongs to the ATP-dependent AMP-binding enzyme family. As to quaternary structure, interacts with FAT1. The cofactor is Mg(2+).

The protein localises to the lipid droplet. It localises to the cell membrane. The catalysed reaction is a long-chain fatty acid + ATP + CoA = a long-chain fatty acyl-CoA + AMP + diphosphate. It carries out the reaction (9Z)-octadecenoate + ATP + CoA = (9Z)-octadecenoyl-CoA + AMP + diphosphate. The enzyme catalyses hexadecanoate + ATP + CoA = hexadecanoyl-CoA + AMP + diphosphate. It catalyses the reaction (9Z)-hexadecenoate + ATP + CoA = (9Z)-hexadecenoyl-CoA + AMP + diphosphate. The catalysed reaction is tetradecanoate + ATP + CoA = tetradecanoyl-CoA + AMP + diphosphate. It carries out the reaction (9Z)-tetradecenoate + ATP + CoA = (9Z)-tetradecenoyl-CoA + AMP + diphosphate. The enzyme catalyses (9Z,12Z)-octadecadienoate + ATP + CoA = (9Z,12Z)-octadecadienoyl-CoA + AMP + diphosphate. It catalyses the reaction dodecanoate + ATP + CoA = dodecanoyl-CoA + AMP + diphosphate. The catalysed reaction is pentadecanoate + ATP + CoA = pentadecanoyl-CoA + AMP + diphosphate. It carries out the reaction undecanoate + ATP + CoA = undecanoyl-CoA + AMP + diphosphate. The enzyme catalyses heptadecanoate + ATP + CoA = heptadecanoyl-CoA + AMP + diphosphate. It catalyses the reaction octadecanoate + ATP + CoA = octadecanoyl-CoA + AMP + diphosphate. In terms of biological role, activates long-chain fatty acids (LCFA) by esterification of the fatty acids into metabolically active CoA-thioesters for subsequent degradation or incorporation into phospholipids. Also facilitates the transport of LCFAs into the cell, either by active transport or by decreasing the intracellular LCFA concentration. It may supplement intracellular myristoyl-CoA pools from exogenous myristate. Preferentially acts on C12:0-C16:0 fatty acids with myristic and pentadecanic acid (C15:0) having the highest activities. Also involved in long-chain base (LCB) uptake of sphingolipids. In contrast ot LCFA uptake, LCB uptake does not require ATP, suggesting that the enzyme is directly involved in active LCB uptake. Involved in the sphingolipid-to-glycerolipid metabolic pathway, converting the sphingolipid metabolite hexadecenoic acid to hexadecenoyl-CoA, which is then further converted to glycerolipids. This chain is Long-chain-fatty-acid--CoA ligase 1 (FAA1), found in Saccharomyces cerevisiae (strain ATCC 204508 / S288c) (Baker's yeast).